Here is a 103-residue protein sequence, read N- to C-terminus: Large ribosomal subunit protein bL21 (103 aa).

The protein belongs to the bacterial ribosomal protein bL21 family. Part of the 50S ribosomal subunit. Contacts protein L20.

This protein binds to 23S rRNA in the presence of protein L20. In Lactobacillus acidophilus (strain ATCC 700396 / NCK56 / N2 / NCFM), this protein is Large ribosomal subunit protein bL21.